Reading from the N-terminus, the 70-residue chain is Large ribosomal subunit protein eL38 (70 aa).

It belongs to the eukaryotic ribosomal protein eL38 family.

The protein is Large ribosomal subunit protein eL38 (RpL38) of Aedes aegypti (Yellowfever mosquito).